Reading from the N-terminus, the 96-residue chain is Conantokin Rl-B (96 aa).

A signal peptide spans 1–21; the sequence is MQLYTYLYLLVPLVTFHLILG. Residues 22 to 78 constitute a propeptide that is removed on maturation; the sequence is TGTLDHGDALTERRSTDATALKPEPVLLQKSSARSTNDNGKDTQMKRILKKRGNKAR. Positions 51-96 are disordered; that stretch reads KSSARSTNDNGKDTQMKRILKKRGNKARGEEELAEKAPEFARELAN. Residues 77-96 are compositionally biased toward basic and acidic residues; that stretch reads ARGEEELAEKAPEFARELAN. Residue Glu-81 participates in a divalent metal cation binding. Residues Glu-81, Glu-82, and Glu-85 each carry the 4-carboxyglutamate modification. Glu-85 serves as a coordination point for a divalent metal cation. Residue Pro-88 is modified to 4-hydroxyproline. Glu-89 and Glu-93 together coordinate a divalent metal cation. Glu-89 and Glu-93 each carry 4-carboxyglutamate. Asn-96 is subject to Asparagine amide.

It belongs to the conotoxin B superfamily. Ca(2+) is required as a cofactor. The cofactor is Mg(2+). In terms of processing, hydroxylation of Pro-88 is important for NR2B/GRIN2B NMDA receptor selectivity. Removal of hydroxylation does not change global NMDA receptor antagonism (tested on WT neurons), but it decreases the inhibitory potency on NR2B/GRIN2B NMDA receptors and increases the inhibitory potency on NR2A/GRIN2A NMDA receptors. Hydroxylation of Pro-88 locally disrupts a small region of the divalent cation-induced alpha-helix but does not destabilize the entire helix. As to expression, expressed by the venom duct.

It is found in the secreted. In terms of biological role, conantokins inhibit N-methyl-D-aspartate (NMDA) receptors. This toxin has antagonist activity on the NR2B/GRIN2B subunit (IC(50)=0.1 uM). In vivo, when delivered into the brain, is active has anticonvulsant activity in the model of epilepsy in mice. This is Conantokin Rl-B from Conus rolani (Cone snail).